Here is a 147-residue protein sequence, read N- to C-terminus: Large ribosomal subunit protein bL9 (147 aa).

This sequence belongs to the bacterial ribosomal protein bL9 family.

Its function is as follows. Binds to the 23S rRNA. The sequence is that of Large ribosomal subunit protein bL9 from Clostridium acetobutylicum (strain ATCC 824 / DSM 792 / JCM 1419 / IAM 19013 / LMG 5710 / NBRC 13948 / NRRL B-527 / VKM B-1787 / 2291 / W).